A 245-amino-acid polypeptide reads, in one-letter code: Lytic switch protein BZLF1 (245 aa).

The transactivation stretch occupies residues 1–167; sequence MMDPNSTSED…RTRKPLQPES (167 aa). 2 positions are modified to phosphothreonine: Thr-14 and Thr-159. The tract at residues 145 to 167 is disordered; that stretch reads GAPQPAPAAAPARRTRKPLQPES. The Bipartite nuclear localization signal signature appears at 157 to 194; it reads RRTRKPLQPESLEECDSELEIKRYKNRVASRKCRAKFK. Residues Ser-167, Ser-173, and Ser-186 each carry the phosphoserine modification. The tract at residues 178-195 is basic motif; it reads KRYKNRVASRKCRAKFKH. A bZIP domain is found at 178-228; the sequence is KRYKNRVASRKCRAKFKHLLQHYREVASAKSSENDRLRLLLKQMCPSLDVD. The interval 196–228 is leucine-zipper; it reads LLQHYREVASAKSSENDRLRLLLKQMCPSLDVD. An accessory activation domain region spans residues 229–245; the sequence is SIIPRTPDVLHEDLLNF.

Belongs to the bZIP family. Homodimer. Interacts (via b-ZIP domain) with the DNA polymerase processivity factor BMRF1 (via N-terminus); this interaction may inhibit BZLF1-induced transcription of the BMRF1 promoter. Interacts with human UBN1, CRTC2 and RACK1. Interacts (via N-terminus) with human PAX5 (via N-terminus); this interaction inhibits BZLF1-mediated lytic viral reactivation. Interacts (via leucine-zipper domain) with host CEBPA; this interaction induces G1 host cell cycle arrest. Interacts (via C-terminus) with host TP53BP1 (via C-terminus); this interaction is involved in the activation of the viral lytic cycle. Interacts with host chromatin-remodeling ATPase INO80; this interaction participates to the activation of early lytic viral genes by BZLF1. Interacts with host regulator of chromatin SMARCA5/hSNF2H; this interaction participates to the activation of early lytic viral genes by BZLF1. Interacts with host PLSCR1/Phospholipid scramblase 1; this interaction negatively regulates the transcriptional regulatory activity of BZLF1 by preventing the formation of the BZLF1-CBP complex.

It localises to the host nucleus. Transcription factor that acts as a molecular switch to induce the transition from the latent to the lytic or productive phase of the virus cycle. Mediates the switch from the latent to the lytic cycle of infection in cells containing a highly methylated viral genome. Probably binds to silenced chromatin and recruits host chromatin-remodeling enzymes. Regulates this switch by binding to 2 types of ZEBRA response elements (ZREs): the CpG-free AP-1 like elements (latency) and the methylated CpG-containing elements (lytic replication). Activates preferentially the methylated forms of the viral lytic R (BRLF1) and Na (BRRF1) gene promoters, the latters being the first genes activated during Z-mediated reactivation in latently infected cells. BZLF1 and BRLF1 act together to trigger lytic replication. Also binds the lytic origin of replication, oriLyt. Induces G1 cell cycle arrest by stabilizing the host CCAAT/enhancer binding protein CEBPA. This function is important because the lytic cycle preferentially takes place in host cells arrested in G1. In Homo sapiens (Human), this protein is Lytic switch protein BZLF1.